A 765-amino-acid chain; its full sequence is BRCA1-associated RING domain protein 1 (765 aa).

Positions 20 to 113 (MEPATDGLWA…KLQNLLHDNK (94 aa)) are required for BRCA1 binding. The RING-type zinc-finger motif lies at 44–81 (CSRCANILKEPVCLGGCEHIFCSGCISDCVGSGCPVCY). A Glycyl lysine isopeptide (Lys-Gly) (interchain with G-Cter in SUMO2) cross-link involves residue Lys152. Disordered stretches follow at residues 183–229 (AVPK…EELK), 299–328 (KDLR…GSNI), and 369–410 (NASD…MPAR). Residues 195–204 (SAKKHPKKSV) show a composition bias toward basic residues. A compositionally biased stretch (basic and acidic residues) spans 207–229 (INREENLRPETKDSRFDSKEELK). A compositionally biased stretch (polar residues) spans 316–328 (PTTSTSDSCGSNI). The residue at position 378 (Ser378) is a Phosphoserine. The residue at position 381 (Thr381) is a Phosphothreonine. Over residues 391–403 (HRQMMSSPSTVKL) the composition is skewed to polar residues. Lys411 participates in a covalent cross-link: Glycyl lysine isopeptide (Lys-Gly) (interchain with G-Cter in SUMO2). ANK repeat units follow at residues 415 to 447 (RGET…VKDH), 448 to 480 (AGWT…TPGY), and 481 to 513 (QNDS…AVNI). The ANK 4; degenerate repeat unit spans residues 514 to 534 (FGVRPVDYTDNENIRSLLLLP). The tract at residues 542–546 (TSQCS) is flexible linker. BRCT domains follow at residues 549 to 641 (NTGQ…KYEV) and 655 to 765 (LLPK…PLDS).

In terms of assembly, homo- and heterodimer. Heterodimer (RING-type zinc finger) with BRCA1. Heterodimer (via ANK repeats and BRCT domains) with CSTF1/CSTF-50. Component of the BRCA1-A complex, at least composed of the BRCA1, BARD1, UIMC1/RAP80, ABRAXAS1, BRCC3/BRCC36, BABAM2 and BABAM1/NBA1. Interacts with UBXN1. Processed during apoptosis. The homodimer is more susceptible to proteolytic cleavage than the BARD1/BRCA1 heterodimer.

The protein resides in the nucleus. It is found in the cytoplasm. It carries out the reaction S-ubiquitinyl-[E2 ubiquitin-conjugating enzyme]-L-cysteine + [acceptor protein]-L-lysine = [E2 ubiquitin-conjugating enzyme]-L-cysteine + N(6)-ubiquitinyl-[acceptor protein]-L-lysine.. It functions in the pathway protein modification; protein ubiquitination. Functionally, E3 ubiquitin-protein ligase. The BRCA1-BARD1 heterodimer specifically mediates the formation of 'Lys-6'-linked polyubiquitin chains and coordinates a diverse range of cellular pathways such as DNA damage repair, ubiquitination and transcriptional regulation to maintain genomic stability. Plays a central role in the control of the cell cycle in response to DNA damage. Acts by mediating ubiquitin E3 ligase activity that is required for its tumor suppressor function. Also forms a heterodimer with CSTF1/CSTF-50 to modulate mRNA processing and RNAP II stability by inhibiting pre-mRNA 3' cleavage. The polypeptide is BRCA1-associated RING domain protein 1 (Bard1) (Mus musculus (Mouse)).